The following is a 99-amino-acid chain: Acylphosphatase-1 (99 aa).

Residues 9-99 (SVDYEVFGKV…LEHSTFSICK (91 aa)) enclose the Acylphosphatase-like domain. Active-site residues include R24 and N42.

This sequence belongs to the acylphosphatase family.

The enzyme catalyses an acyl phosphate + H2O = a carboxylate + phosphate + H(+). The polypeptide is Acylphosphatase-1 (acyp1) (Xenopus laevis (African clawed frog)).